The chain runs to 582 residues: Guanine nucleotide-binding protein-like NSN1 (582 aa).

Residues 1-46 are compositionally biased toward basic residues; it reads MVKRSKKSKSKRVTLKQKHKVLKKVKEHHKKKAKDAKKLGLHRKPR. The interval 1–58 is disordered; the sequence is MVKRSKKSKSKRVTLKQKHKVLKKVKEHHKKKAKDAKKLGLHRKPRVEKDPGIPNDWP. The tract at residues 2–49 is basic; that stretch reads VKRSKKSKSKRVTLKQKHKVLKKVKEHHKKKAKDAKKLGLHRKPRVEK. Short sequence motifs (nuclear localization signal) lie at residues 5 to 12, 22 to 29, and 69 to 76; these read SKKSKSKR, LKKVKEHH, and VRRARALE. A coiled-coil region spans residues 15–94; it reads LKQKHKVLKK…RKERAKKRKL (80 aa). Positions 127–311 constitute a CP-type G domain; it reads YKELVKVIEL…LLDCPGVVML (185 aa). The DARXP motif signature appears at 145-149; the sequence is DARDP. A G4 region spans residues 175 to 178; the sequence is NKID. 175 to 178 serves as a coordination point for GTP; sequence NKID. The segment at 202–204 is G5; sequence KCS. The tract at residues 260–267 is G1; sequence GLPNVGKS. 263-268 lines the GTP pocket; the sequence is NVGKSS. Residues 281–456 are intermediate; it reads VGATPGLTRS…NEFNPVIIPS (176 aa). The segment at 286 to 290 is G2; the sequence is GLTRS. Residues 304–307 and glycine 307 each bind GTP; that span reads DCPG. The interval 304–307 is G3; it reads DCPG. Positions 463-551 are acidic; sequence DETMIEDESK…EEDLMDGDYD (89 aa). The segment at 469 to 545 is disordered; that stretch reads DESKTQTEEE…KKAGADEEDL (77 aa). The span at 476 to 496 shows a compositional bias: acidic residues; the sequence is EEEAEHESDDDESMGGEEEEE. Positions 497–506 are enriched in basic and acidic residues; sequence AGKTKEKSET. Residues 515–537 adopt a coiled-coil conformation; that stretch reads AAESMLNTKKQKAEKKKRKKAKK. The short motif at 522–529 is the Nuclear localization signal 4 element; the sequence is TKKQKAEK. The span at 523-537 shows a compositional bias: basic residues; that stretch reads KKQKAEKKKRKKAKK.

It belongs to the TRAFAC class YlqF/YawG GTPase family. In terms of assembly, interacts with EBP2 and PES. Mostly expressed in flowers, siliques and inflorescence apex, and, to a lower extent, in stems and leaves.

The protein resides in the nucleus. It is found in the nucleolus. Its function is as follows. Involved in the differentiation of epidermal cells, probably via the regulation of the expression of meristem-related genes (e.g. CLV3, STM, KNAT1, CUC2 and AG) and of leaf polarity-related genes (e.g. YAB5, FIL, AS2, PHB and PHV). May play a role in regulating cellular proliferation. Necessary for flower development, probably by preventing apical dominance through the down-regulation of AG expression. Required for embryogenesis, leaf and cotyledon development, as well as for leaf polarity establishment. Plays an important role in plant growth and senescence by modulating ribosome biogenesis in nucleolus. Possesses GTPAse activity in vitro. Possesses RNA binding activity in vitro. Associates with ribosomes. The sequence is that of Guanine nucleotide-binding protein-like NSN1 from Arabidopsis thaliana (Mouse-ear cress).